The primary structure comprises 270 residues: uncharacterized protein (270 aa).

Disordered regions lie at residues 35–67 (IKQD…GGNK) and 168–204 (SNNN…DNSN). A compositionally biased stretch (low complexity) spans 39–48 (NNNNNNNNTN). Residues 49–67 (VSLSPSIKSQATSSTGGNK) are compositionally biased toward polar residues. Positions 168–191 (SNNNNNNNNNNNNNNNNNNNNNNN) are enriched in low complexity.

This is an uncharacterized protein from Dictyostelium discoideum (Social amoeba).